The sequence spans 1067 residues: Ubiquitin carboxyl-terminal hydrolase 26 (1067 aa).

Over residues Met1–Arg12 the composition is skewed to basic residues. A disordered region spans residues Met1–Ser22. Residues Ala106–Arg442 enclose the USP domain. The active-site Nucleophile is the Cys115. Residue His359 is the Proton acceptor of the active site. Positions Lys385–Ser418 are disordered. The segment covering Glu390–Ser418 has biased composition (polar residues). DUSP domains are found at residues Asn503–Cys595, Asp610–Cys711, and Thr738–Ile861. The Ubiquitin-like domain maps to Phe948–Glu1031.

Belongs to the peptidase C19 family. As to expression, expressed in seedlings, roots, stems, leaves and inflorescences.

It localises to the nucleus. It catalyses the reaction Thiol-dependent hydrolysis of ester, thioester, amide, peptide and isopeptide bonds formed by the C-terminal Gly of ubiquitin (a 76-residue protein attached to proteins as an intracellular targeting signal).. In terms of biological role, recognizes and hydrolyzes the peptide bond at the C-terminal Gly of ubiquitin. Involved in the processing of poly-ubiquitin precursors as well as that of ubiquitinated proteins. Deubiquitinates H2BK143ub1 of histone H2B. In Arabidopsis thaliana (Mouse-ear cress), this protein is Ubiquitin carboxyl-terminal hydrolase 26 (UBP26).